The following is a 322-amino-acid chain: Eukaryotic translation initiation factor 3 subunit I (322 aa).

5 WD repeats span residues 4–43 (GHER…RLGT), 46–85 (GHQG…VIAS), 141–180 (MVES…KVVD), 184–223 (DHTA…CLKT), and 281–322 (GHFG…NIFE).

It belongs to the eIF-3 subunit I family. As to quaternary structure, component of the eukaryotic translation initiation factor 3 (eIF-3) complex. The eIF-3 complex interacts with pix.

It localises to the cytoplasm. Functionally, component of the eukaryotic translation initiation factor 3 (eIF-3) complex, which is involved in protein synthesis of a specialized repertoire of mRNAs and, together with other initiation factors, stimulates binding of mRNA and methionyl-tRNAi to the 40S ribosome. The eIF-3 complex specifically targets and initiates translation of a subset of mRNAs involved in cell proliferation. The polypeptide is Eukaryotic translation initiation factor 3 subunit I (Drosophila mojavensis (Fruit fly)).